Here is a 1212-residue protein sequence, read N- to C-terminus: Filamin-A-interacting protein 1 (1212 aa).

Positions 1 to 15 (MRSRNQGGESSSNGH) are enriched in polar residues. The interval 1-73 (MRSRNQGGES…SEKKTKKSVE (73 aa)) is disordered. Basic and acidic residues-rich tracts occupy residues 32 to 47 (PSEDAKKNKANRKEED) and 60 to 73 (PSGESEKKTKKSVE). Position 137 is a phosphoserine (serine 137). Coiled coils occupy residues 191 to 575 (DYMN…DELM) and 623 to 777 (PEDN…ELEL). Disordered stretches follow at residues 871-898 (WMRKRENGPSTPQEKGPRPNQGAGHPGE) and 948-975 (KPRITIIPSPNVMSQKPKSADPTLGPER). Serine 978 is modified (phosphoserine). Positions 1102–1190 (VSTGTVLRSP…TKFQPRAETQ (89 aa)) are disordered. Positions 1124–1138 (VTSTITITPVTTSST) are enriched in low complexity. Positions 1139 to 1155 (RGTQSVSGQDGSSQRPT) are enriched in polar residues.

This sequence belongs to the FILIP1 family. In terms of assembly, interacts with FLNA. Interacts with RHOD (in GTP-bound form). Expressed in muscle tissue, including heart. Found in cortical ventricular zone.

It is found in the cytoplasm. It localises to the cytoskeleton. The protein resides in the stress fiber. Functionally, by acting through a filamin-A/F-actin axis, it controls the start of neocortical cell migration from the ventricular zone. May be able to induce the degradation of Filamin A. The polypeptide is Filamin-A-interacting protein 1 (Filip1) (Rattus norvegicus (Rat)).